Consider the following 117-residue polypeptide: Immunoglobulin heavy variable 3-11 (117 aa).

The signal sequence occupies residues 1–19 (MEFGLSWVFLVAIIKGVQC). Gln-20 carries the pyrrolidone carboxylic acid modification. Positions 20–44 (QVQLVESGGGLVKPGGSLRLSCAAS) are framework-1. One can recognise an Ig-like domain in the interval 20–117 (QVQLVESGGG…EDTAVYYCAR (98 aa)). Cysteines 41 and 115 form a disulfide. Positions 45 to 52 (GFTFSDYY) are complementarity-determining-1. The interval 53–69 (MSWIRQAPGKGLEWVSY) is framework-2. A complementarity-determining-2 region spans residues 70 to 77 (ISSSSSYT). The tract at residues 78-115 (NYADSVKGRFTISRDNAKNSLYLQMNSLRAEDTAVYYC) is framework-3. The interval 116-117 (AR) is complementarity-determining-3.

As to quaternary structure, immunoglobulins are composed of two identical heavy chains and two identical light chains; disulfide-linked.

It localises to the secreted. It is found in the cell membrane. Functionally, v region of the variable domain of immunoglobulin heavy chains that participates in the antigen recognition. Immunoglobulins, also known as antibodies, are membrane-bound or secreted glycoproteins produced by B lymphocytes. In the recognition phase of humoral immunity, the membrane-bound immunoglobulins serve as receptors which, upon binding of a specific antigen, trigger the clonal expansion and differentiation of B lymphocytes into immunoglobulins-secreting plasma cells. Secreted immunoglobulins mediate the effector phase of humoral immunity, which results in the elimination of bound antigens. The antigen binding site is formed by the variable domain of one heavy chain, together with that of its associated light chain. Thus, each immunoglobulin has two antigen binding sites with remarkable affinity for a particular antigen. The variable domains are assembled by a process called V-(D)-J rearrangement and can then be subjected to somatic hypermutations which, after exposure to antigen and selection, allow affinity maturation for a particular antigen. The polypeptide is Immunoglobulin heavy variable 3-11 (Homo sapiens (Human)).